Consider the following 223-residue polypeptide: MIVVYSLGGSVLAAQDSAGLKRYAEALRTIARDNQVYVVVGGGALAREYIGKARDVGASEALCDSIGILATRMNAALLAAALDGSAPFRVPESYDDAIEASKTYRMVVMGGVSPGQTTDAVAALLAEYTRATLLVIATSVNGVYTSDPEKDPGAVKIPRMGAKDLSRMMSQIELKAGSKSPVDPLAAKIIERSHIPTVVVDGRNVANLIRAIDGTHDGTEIRS.

9–10 provides a ligand contact to ATP; that stretch reads GS. Gly-42 provides a ligand contact to UMP. The ATP site is built by Gly-43 and Arg-47. Residues Asp-64 and 112–118 each bind UMP; that span reads VSPGQTT. ATP contacts are provided by Thr-138, Tyr-144, and Asp-147.

It belongs to the UMP kinase family. Homohexamer.

It localises to the cytoplasm. The enzyme catalyses UMP + ATP = UDP + ADP. It participates in pyrimidine metabolism; CTP biosynthesis via de novo pathway; UDP from UMP (UMPK route): step 1/1. With respect to regulation, inhibited by UTP. In terms of biological role, catalyzes the reversible phosphorylation of UMP to UDP. The protein is Uridylate kinase of Methanothrix thermoacetophila (strain DSM 6194 / JCM 14653 / NBRC 101360 / PT) (Methanosaeta thermophila).